The chain runs to 171 residues: Small ribosomal subunit protein uS5 (171 aa).

One can recognise an S5 DRBM domain in the interval 15 to 78; it reads YEEKVVKIKR…EKAKKQLIRI (64 aa).

The protein belongs to the universal ribosomal protein uS5 family. As to quaternary structure, part of the 30S ribosomal subunit. Contacts proteins S4 and S8.

Its function is as follows. With S4 and S12 plays an important role in translational accuracy. In terms of biological role, located at the back of the 30S subunit body where it stabilizes the conformation of the head with respect to the body. In Phytoplasma australiense, this protein is Small ribosomal subunit protein uS5.